The primary structure comprises 208 residues: 2-phospho-L-lactate guanylyltransferase (208 aa).

Belongs to the CofC family. Homodimer.

The catalysed reaction is (2S)-2-phospholactate + GTP + H(+) = (2S)-lactyl-2-diphospho-5'-guanosine + diphosphate. It functions in the pathway cofactor biosynthesis; coenzyme F420 biosynthesis. Functionally, guanylyltransferase that catalyzes the activation of (2S)-2-phospholactate (2-PL) as (2S)-lactyl-2-diphospho-5'-guanosine, via the condensation of 2-PL with GTP. It is involved in the biosynthesis of coenzyme F420, a hydride carrier cofactor. The sequence is that of 2-phospho-L-lactate guanylyltransferase from Methanosarcina barkeri (strain Fusaro / DSM 804).